The chain runs to 101 residues: Small ribosomal subunit protein uS14 (101 aa).

This sequence belongs to the universal ribosomal protein uS14 family. Part of the 30S ribosomal subunit. Contacts proteins S3 and S10.

Binds 16S rRNA, required for the assembly of 30S particles and may also be responsible for determining the conformation of the 16S rRNA at the A site. This chain is Small ribosomal subunit protein uS14, found in Albidiferax ferrireducens (strain ATCC BAA-621 / DSM 15236 / T118) (Rhodoferax ferrireducens).